The primary structure comprises 348 residues: Ribonuclease H (348 aa).

A compositionally biased stretch (polar residues) spans 54–65 (NTTSNYGSSTHA). The disordered stretch occupies residues 54–81 (NTTSNYGSSTHAGGQVSKPHTTQKRVHR). The 163-residue stretch at 184–346 (YNKSMNVYCD…ADFLAKKGAS (163 aa)) folds into the RNase H type-1 domain. 4 residues coordinate Mg(2+): Asp193, Glu235, Asp264, and Asp338.

It belongs to the RNase H family. The cofactor is Mg(2+).

The catalysed reaction is Endonucleolytic cleavage to 5'-phosphomonoester.. Functionally, endonuclease that specifically degrades the RNA of RNA-DNA hybrids. This is Ribonuclease H (RNH1) from Saccharomyces cerevisiae (strain ATCC 204508 / S288c) (Baker's yeast).